Consider the following 119-residue polypeptide: Fluoride-specific ion channel FluC (119 aa).

4 consecutive transmembrane segments (helical) span residues 5–25 (IIPLSIGAALGATARWLLNLA), 34–54 (TGNLFANWTGALLIGIFAETI), 59–79 (WKLLLITGFLGSLTTLSGFSL), and 97–117 (IFLHTAGSLLLTWLGLKIGAA). Residues G69 and T72 each contribute to the Na(+) site.

Belongs to the fluoride channel Fluc/FEX (TC 1.A.43) family.

The protein localises to the cell inner membrane. The enzyme catalyses fluoride(in) = fluoride(out). With respect to regulation, na(+) is not transported, but it plays an essential structural role and its presence is essential for fluoride channel function. Its function is as follows. Fluoride-specific ion channel. Important for reducing fluoride concentration in the cell, thus reducing its toxicity. The protein is Fluoride-specific ion channel FluC of Neisseria meningitidis serogroup C / serotype 2a (strain ATCC 700532 / DSM 15464 / FAM18).